The primary structure comprises 1070 residues: Carbamoyl phosphate synthase large chain (1070 aa).

The carboxyphosphate synthetic domain stretch occupies residues M1–D399. The ATP site is built by R129, R169, G175, G176, E208, V210, E215, G241, V242, H243, Q284, and E296. In terms of domain architecture, ATP-grasp 1 spans K133–I325. 3 residues coordinate Mg(2+): Q284, E296, and N298. Residues Q284, E296, and N298 each coordinate Mn(2+). Residues I400–T540 form an oligomerization domain region. Residues N541 to L931 are carbamoyl phosphate synthetic domain. In terms of domain architecture, ATP-grasp 2 spans Y672–A863. ATP-binding residues include R708, D747, L749, E754, G779, V780, H781, S782, Q822, and E834. 3 residues coordinate Mg(2+): Q822, E834, and N836. Positions 822, 834, and 836 each coordinate Mn(2+). One can recognise an MGS-like domain in the interval N930 to L1070. The allosteric domain stretch occupies residues L932 to L1070.

This sequence belongs to the CarB family. Composed of two chains; the small (or glutamine) chain promotes the hydrolysis of glutamine to ammonia, which is used by the large (or ammonia) chain to synthesize carbamoyl phosphate. Tetramer of heterodimers (alpha,beta)4. It depends on Mg(2+) as a cofactor. Requires Mn(2+) as cofactor.

It carries out the reaction hydrogencarbonate + L-glutamine + 2 ATP + H2O = carbamoyl phosphate + L-glutamate + 2 ADP + phosphate + 2 H(+). It catalyses the reaction hydrogencarbonate + NH4(+) + 2 ATP = carbamoyl phosphate + 2 ADP + phosphate + 2 H(+). It participates in amino-acid biosynthesis; L-arginine biosynthesis; carbamoyl phosphate from bicarbonate: step 1/1. It functions in the pathway pyrimidine metabolism; UMP biosynthesis via de novo pathway; (S)-dihydroorotate from bicarbonate: step 1/3. Large subunit of the glutamine-dependent carbamoyl phosphate synthetase (CPSase). CPSase catalyzes the formation of carbamoyl phosphate from the ammonia moiety of glutamine, carbonate, and phosphate donated by ATP, constituting the first step of 2 biosynthetic pathways, one leading to arginine and/or urea and the other to pyrimidine nucleotides. The large subunit (synthetase) binds the substrates ammonia (free or transferred from glutamine from the small subunit), hydrogencarbonate and ATP and carries out an ATP-coupled ligase reaction, activating hydrogencarbonate by forming carboxy phosphate which reacts with ammonia to form carbamoyl phosphate. This chain is Carbamoyl phosphate synthase large chain, found in Methanosarcina acetivorans (strain ATCC 35395 / DSM 2834 / JCM 12185 / C2A).